A 411-amino-acid chain; its full sequence is ACT domain-containing protein ACR9 (411 aa).

ACT domains follow at residues 22–105, 111–194, and 243–322; these read VVTV…NVSK, LLKF…LAGP, and LLQI…VIIV.

Its function is as follows. May bind amino acids. This Arabidopsis thaliana (Mouse-ear cress) protein is ACT domain-containing protein ACR9.